We begin with the raw amino-acid sequence, 681 residues long: DNA ligase (681 aa).

NAD(+)-binding positions include 42-46 (DAEYD), 91-92 (SL), and E120. The active-site N6-AMP-lysine intermediate is K122. 4 residues coordinate NAD(+): R143, E180, K302, and K326. Residues C420, C423, C438, and C444 each coordinate Zn(2+). The region spanning 603 to 681 (ADAQPLLGQT…EAGLIELIGL (79 aa)) is the BRCT domain.

The protein belongs to the NAD-dependent DNA ligase family. LigA subfamily. It depends on Mg(2+) as a cofactor. Requires Mn(2+) as cofactor.

The enzyme catalyses NAD(+) + (deoxyribonucleotide)n-3'-hydroxyl + 5'-phospho-(deoxyribonucleotide)m = (deoxyribonucleotide)n+m + AMP + beta-nicotinamide D-nucleotide.. Functionally, DNA ligase that catalyzes the formation of phosphodiester linkages between 5'-phosphoryl and 3'-hydroxyl groups in double-stranded DNA using NAD as a coenzyme and as the energy source for the reaction. It is essential for DNA replication and repair of damaged DNA. This Shewanella amazonensis (strain ATCC BAA-1098 / SB2B) protein is DNA ligase.